The sequence spans 55 residues: Large ribosomal subunit protein bL33 (55 aa).

Basic and acidic residues predominate over residues Met-1–Leu-11. Positions Met-1–Asn-26 are disordered.

The protein belongs to the bacterial ribosomal protein bL33 family.

The polypeptide is Large ribosomal subunit protein bL33 (Methylibium petroleiphilum (strain ATCC BAA-1232 / LMG 22953 / PM1)).